The following is a 690-amino-acid chain: Glycine--tRNA ligase beta subunit (690 aa).

It belongs to the class-II aminoacyl-tRNA synthetase family. Tetramer of two alpha and two beta subunits.

The protein resides in the cytoplasm. It carries out the reaction tRNA(Gly) + glycine + ATP = glycyl-tRNA(Gly) + AMP + diphosphate. The polypeptide is Glycine--tRNA ligase beta subunit (Desulfitobacterium hafniense (strain DSM 10664 / DCB-2)).